We begin with the raw amino-acid sequence, 602 residues long: Arginine--tRNA ligase (602 aa).

The 'HIGH' region signature appears at 124 to 134; sequence ANPTGPVHVGR.

It belongs to the class-I aminoacyl-tRNA synthetase family.

The protein localises to the cytoplasm. The catalysed reaction is tRNA(Arg) + L-arginine + ATP = L-arginyl-tRNA(Arg) + AMP + diphosphate. This chain is Arginine--tRNA ligase, found in Halorubrum lacusprofundi (strain ATCC 49239 / DSM 5036 / JCM 8891 / ACAM 34).